The following is a 268-amino-acid chain: Hydroxyethylthiazole kinase (268 aa).

Methionine 45 contributes to the substrate binding site. Positions 121 and 167 each coordinate ATP. Residue glycine 194 participates in substrate binding.

Belongs to the Thz kinase family. Mg(2+) serves as cofactor.

The catalysed reaction is 5-(2-hydroxyethyl)-4-methylthiazole + ATP = 4-methyl-5-(2-phosphooxyethyl)-thiazole + ADP + H(+). Its pathway is cofactor biosynthesis; thiamine diphosphate biosynthesis; 4-methyl-5-(2-phosphoethyl)-thiazole from 5-(2-hydroxyethyl)-4-methylthiazole: step 1/1. In terms of biological role, catalyzes the phosphorylation of the hydroxyl group of 4-methyl-5-beta-hydroxyethylthiazole (THZ). This Bacillus cereus (strain ZK / E33L) protein is Hydroxyethylthiazole kinase.